A 533-amino-acid chain; its full sequence is Beta-glucosidase 22 (533 aa).

Residues 1 to 24 (MAVSSSTSTCSSFSLLLLLLLLAA) form the signal peptide. N41 carries N-linked (GlcNAc...) asparagine glycosylation. Residues Q61, H161, and 206-207 (DE) each bind a beta-D-glucoside. E207 functions as the Proton donor in the catalytic mechanism. Residues C226 and C234 are joined by a disulfide bond. 2 N-linked (GlcNAc...) asparagine glycosylation sites follow: N233 and N238. A beta-D-glucoside-binding residues include Y350 and E421. E421 (nucleophile) is an active-site residue. Residue N435 is glycosylated (N-linked (GlcNAc...) asparagine). Positions 466 and 482 each coordinate a beta-D-glucoside.

This sequence belongs to the glycosyl hydrolase 1 family.

It catalyses the reaction Hydrolysis of terminal, non-reducing beta-D-glucosyl residues with release of beta-D-glucose.. This chain is Beta-glucosidase 22 (BGLU22), found in Oryza sativa subsp. japonica (Rice).